A 674-amino-acid chain; its full sequence is Pannexin-2 (674 aa).

Residues 11–53 (MATALLAGEKLRELILPGSQDDKAGALAALLLQLKLELPFDRV) are Cytoplasmic-facing. A helical membrane pass occupies residues 54 to 74 (VTIGTVLVPILLVTLVFTKNF). At 75 to 125 (AEEPIYCYTPHNFTRDQALYARGYCWTELRDALPGVDASLWPSLFEHKFLP) the chain is on the extracellular side. N86 carries N-linked (GlcNAc...) asparagine glycosylation. Residues 126 to 146 (YALLAFAAIMYVPALGWEFLA) form a helical membrane-spanning segment. At 147–230 (STRLTSELNF…NFLAKLYLAR (84 aa)) the chain is on the cytoplasmic side. A helical transmembrane segment spans residues 231–251 (HVLILLLSVVPISYLCTYYAT). Topologically, residues 252–295 (QKQNEFTCALGASPDGPVGSAGPTVRVSCKLPSVQLQRIIAGVD) are extracellular. A helical transmembrane segment spans residues 296 to 316 (IVLLCFMNLIILVNLIHLFIF). The Cytoplasmic portion of the chain corresponds to 317 to 674 (RKSNFIFDKL…PRTVVSTVEF (358 aa)). Over residues 394 to 408 (TTPTVRDSGIQTVDP) the composition is skewed to polar residues. Disordered stretches follow at residues 394-426 (TTPT…VVKR) and 485-510 (AHHY…KKHT). 2 positions are modified to phosphoserine: S590 and S601.

This sequence belongs to the pannexin family. Forms PANX1/PANX2-heteromeric intercellular channels on coexpression in paired Xenopus oocytes. Does not form homomeric channels. Post-translationally, S-palmitoylated in neural stem and progenitor cells. In terms of processing, cleaved by CASP3 and CASP7 during apoptosis. Cleavage has no effect on it function. As to expression, expressed in the eye, thyroid, prostate, kidney and liver. Abundantly expressed in the CNS, including hippocampus, olfactory bulb, cortex, cerebellum. Not detected in the white matter.

The protein localises to the cell membrane. Its subcellular location is the golgi apparatus membrane. The protein resides in the endoplasmic reticulum membrane. Structural component of the gap junctions and the hemichannels. This chain is Pannexin-2 (Panx2), found in Rattus norvegicus (Rat).